Reading from the N-terminus, the 322-residue chain is Follistatin-A (322 aa).

The signal sequence occupies residues 1–32; the sequence is MLRMLKRQQLHPGMILLLFWLCYLIEDQKVQA. In terms of domain architecture, TB spans 33-106; sequence GNCWLQQGKN…TCDNVDCGPG (74 aa). 8 cysteine pairs are disulfide-bonded: Cys-35/Cys-58, Cys-45/Cys-91, Cys-59/Cys-94, Cys-98/Cys-109, Cys-103/Cys-119, Cys-121/Cys-153, Cys-125/Cys-146, and Cys-135/Cys-167. A glycan (N-linked (GlcNAc...) asparagine) is linked at Asn-75. The Follistatin-like 1 domain occupies 97–120; it reads TCDNVDCGPGKRCKMNRRSKPRCV. Kazal-like domains are found at residues 103-169, 189-244, and 267-321; these read CGPG…KCKK, NAYC…KCIK, and RGRC…SCNC. Residue Asn-127 is glycosylated (N-linked (GlcNAc...) asparagine). The 24-residue stretch at 170–193 folds into the Follistatin-like 2 domain; sequence TCRDVLCPGSSTCVVDQTNNAYCV. 3 disulfides stabilise this stretch: Cys-195-Cys-228, Cys-199-Cys-221, and Cys-210-Cys-242. The Follistatin-like 3 domain occupies 247 to 271; sequence SCDDIHCSAGKKCLWDAKMSRGRCA. 3 disulfides stabilise this stretch: Cys-273–Cys-305, Cys-277–Cys-298, and Cys-287–Cys-319. N-linked (GlcNAc...) asparagine glycosylation is present at Asn-291.

As to quaternary structure, monomer. As to expression, not expressed in the organizer region. Expression in gastrulating embryos is confined to anterior and paraxial regions, which give rise to head mesoderm and the first five somites. In addition, expressed transiently in a subset of cells in the posterior notochord anlage. Later, expression is seen in brain, eyes and somites.

Its function is as follows. Binds directly to activin and functions as an activin antagonist. Specific inhibitor of the biosynthesis and secretion of pituitary follicle stimulating hormone (fsh). Inhibits bmp-signaling during later stages of development including late phases of dorsoventral patterning, to refine the early pattern set up by the interaction of chordino and bmp2/4. Not involved in organizer function or early phases of dorsoventral pattern formation. This is Follistatin-A (fsta) from Danio rerio (Zebrafish).